We begin with the raw amino-acid sequence, 542 residues long: CTP synthase (542 aa).

Residues 1–265 (MARYIFITGG…DDEVLAAFGL (265 aa)) are amidoligase domain. Ser-13 lines the CTP pocket. Ser-13 lines the UTP pocket. 14–19 (SLGKGL) is an ATP binding site. Tyr-54 is an L-glutamine binding site. Asp-71 provides a ligand contact to ATP. The Mg(2+) site is built by Asp-71 and Glu-139. Residues 146 to 148 (DIE), 186 to 191 (KTKPTQ), and Lys-222 contribute to the CTP site. UTP contacts are provided by residues 186 to 191 (KTKPTQ) and Lys-222. 238–240 (RDA) serves as a coordination point for ATP. In terms of domain architecture, Glutamine amidotransferase type-1 spans 290–541 (TIAIVGKYTG…IQAAVVQSRL (252 aa)). Gly-352 provides a ligand contact to L-glutamine. The active-site Nucleophile; for glutamine hydrolysis is the Cys-379. L-glutamine contacts are provided by residues 380–383 (FGMQ), Glu-403, and Arg-469. Residues His-514 and Glu-516 contribute to the active site.

Belongs to the CTP synthase family. As to quaternary structure, homotetramer.

It catalyses the reaction UTP + L-glutamine + ATP + H2O = CTP + L-glutamate + ADP + phosphate + 2 H(+). It carries out the reaction L-glutamine + H2O = L-glutamate + NH4(+). The enzyme catalyses UTP + NH4(+) + ATP = CTP + ADP + phosphate + 2 H(+). It participates in pyrimidine metabolism; CTP biosynthesis via de novo pathway; CTP from UDP: step 2/2. With respect to regulation, allosterically activated by GTP, when glutamine is the substrate; GTP has no effect on the reaction when ammonia is the substrate. The allosteric effector GTP functions by stabilizing the protein conformation that binds the tetrahedral intermediate(s) formed during glutamine hydrolysis. Inhibited by the product CTP, via allosteric rather than competitive inhibition. Functionally, catalyzes the ATP-dependent amination of UTP to CTP with either L-glutamine or ammonia as the source of nitrogen. Regulates intracellular CTP levels through interactions with the four ribonucleotide triphosphates. The chain is CTP synthase from Nitrobacter hamburgensis (strain DSM 10229 / NCIMB 13809 / X14).